The chain runs to 331 residues: Ketol-acid reductoisomerase (NADP(+)) (331 aa).

One can recognise a KARI N-terminal Rossmann domain in the interval A2–T182. NADP(+)-binding positions include Y25–Q28, S51, S53, and D83–Q86. Residue H108 is part of the active site. G134 is a binding site for NADP(+). The KARI C-terminal knotted domain occupies N183–L328. Residues D191, E195, E227, and E231 each coordinate Mg(2+). S252 lines the substrate pocket.

The protein belongs to the ketol-acid reductoisomerase family. Requires Mg(2+) as cofactor.

The catalysed reaction is (2R)-2,3-dihydroxy-3-methylbutanoate + NADP(+) = (2S)-2-acetolactate + NADPH + H(+). It carries out the reaction (2R,3R)-2,3-dihydroxy-3-methylpentanoate + NADP(+) = (S)-2-ethyl-2-hydroxy-3-oxobutanoate + NADPH + H(+). It functions in the pathway amino-acid biosynthesis; L-isoleucine biosynthesis; L-isoleucine from 2-oxobutanoate: step 2/4. It participates in amino-acid biosynthesis; L-valine biosynthesis; L-valine from pyruvate: step 2/4. Involved in the biosynthesis of branched-chain amino acids (BCAA). Catalyzes an alkyl-migration followed by a ketol-acid reduction of (S)-2-acetolactate (S2AL) to yield (R)-2,3-dihydroxy-isovalerate. In the isomerase reaction, S2AL is rearranged via a Mg-dependent methyl migration to produce 3-hydroxy-3-methyl-2-ketobutyrate (HMKB). In the reductase reaction, this 2-ketoacid undergoes a metal-dependent reduction by NADPH to yield (R)-2,3-dihydroxy-isovalerate. The chain is Ketol-acid reductoisomerase (NADP(+)) from Synechococcus sp. (strain CC9311).